A 125-amino-acid polypeptide reads, in one-letter code: Large ribosomal subunit protein bL12 (125 aa).

Belongs to the bacterial ribosomal protein bL12 family. In terms of assembly, homodimer. Part of the ribosomal stalk of the 50S ribosomal subunit. Forms a multimeric L10(L12)X complex, where L10 forms an elongated spine to which 2 to 4 L12 dimers bind in a sequential fashion. Binds GTP-bound translation factors.

Functionally, forms part of the ribosomal stalk which helps the ribosome interact with GTP-bound translation factors. Is thus essential for accurate translation. In Helicobacter pylori (strain P12), this protein is Large ribosomal subunit protein bL12.